Here is a 564-residue protein sequence, read N- to C-terminus: Phomacin cluster regulator phmR (564 aa).

The segment at residues 33-64 (CDRCRGHKLRCIRDQMTVDSPCQRCRKAREKC) is a DNA-binding region (zn(2)-C6 fungal-type). Disordered stretches follow at residues 68–93 (SSTRPVPARLNRSSQGHKLPGATSSA), 152–197 (DFAD…NPFL), and 252–278 (PIHPPTMASSHRTHSTASNDSSKDSTT). Polar residues-rich tracts occupy residues 182–192 (ITPTSQGTTAV) and 258–278 (MASSHRTHSTASNDSSKDSTT).

The protein resides in the nucleus. In terms of biological role, transcription factor that specifically regulates the expression of the gene cluster that mediates the biosynthesis of the mycotoxins phomacins, leucine-derived cytochalasans with potent actin polymerization-inhibitory activities and monocot-specific antigerminative activities. The polypeptide is Phomacin cluster regulator phmR (Phaeosphaeria nodorum (strain SN15 / ATCC MYA-4574 / FGSC 10173) (Glume blotch fungus)).